The sequence spans 290 residues: Gene 69 protein (290 aa).

The protein is Gene 69 protein (69) of Mycobacterium phage L5 (Mycobacteriophage L5).